Here is a 333-residue protein sequence, read N- to C-terminus: Fructose-1,6-bisphosphatase class 1 (333 aa).

Positions 92, 113, 115, and 116 each coordinate Mg(2+). Substrate-binding positions include 116–119, Asn-209, Tyr-242, and Lys-272; that span reads DGSS. Glu-278 contributes to the Mg(2+) binding site.

This sequence belongs to the FBPase class 1 family. In terms of assembly, homotetramer. Requires Mg(2+) as cofactor.

It localises to the cytoplasm. It carries out the reaction beta-D-fructose 1,6-bisphosphate + H2O = beta-D-fructose 6-phosphate + phosphate. The protein operates within carbohydrate biosynthesis; Calvin cycle. The polypeptide is Fructose-1,6-bisphosphatase class 1 (Chlorobaculum parvum (strain DSM 263 / NCIMB 8327) (Chlorobium vibrioforme subsp. thiosulfatophilum)).